Reading from the N-terminus, the 345-residue chain is UDP-N-acetylenolpyruvoylglucosamine reductase (345 aa).

An FAD-binding PCMH-type domain is found at 15-218 (VDVYAEKVII…NTIIFLRYKK (204 aa)). Residue arginine 161 is part of the active site. The active-site Proton donor is serine 230. The active site involves glutamate 327.

This sequence belongs to the MurB family. The cofactor is FAD.

It localises to the cytoplasm. It carries out the reaction UDP-N-acetyl-alpha-D-muramate + NADP(+) = UDP-N-acetyl-3-O-(1-carboxyvinyl)-alpha-D-glucosamine + NADPH + H(+). Its pathway is cell wall biogenesis; peptidoglycan biosynthesis. Cell wall formation. This chain is UDP-N-acetylenolpyruvoylglucosamine reductase, found in Blochmanniella floridana.